The primary structure comprises 145 residues: Halilectin 3, alpha chain (145 aa).

Residue Asn73 is glycosylated (N-linked (GlcNAc...) asparagine).

As to quaternary structure, probable heterotrimer consisting of an alpha chain and two beta chains. The alpha chain can probably have different glycosylation states. Post-translationally, glycosylated.

In terms of biological role, lectin with affinity for N-acetyl-galactosamine, carragenan and glycoprotein porcine stomach mucin (PSM). Has metal-independent hemagglutinating activity towards erythrocytes from rabbit and human. Hemagglutinating activity is not inhibited by D-galactose, D-glucose, D-mannose, D-fucose, methyl-alpha-D-galactopyranoside, methyl-alpha-D-glucopyranoside, N-acetyl-glucosamine, N-acetyl-mannosamine, D-fructose, alpha-D-lactose, beta-D-lactose, D-lactulose, D-sucrose, fucoidan or glycoproteins thyroglobulin and ovalmucoid. The chain is Halilectin 3, alpha chain from Haliclona caerulea (Blue Caribbean sponge).